A 668-amino-acid polypeptide reads, in one-letter code: MHLRTNPSICPGRRPAWTLWMCSLFWGCIVSSVWSSSNVASSASSSSSVSQAQYEHHFHGSKHHSVPISIYRSPVSLRGGHAGATYIFGKSGGLILYTWPANDRPSTRTDRLAVGFSTTVKDGILVRIDSAPGLGDFLQLHIEQGKIGVVFNIGTVDISIKEESTPVNDGKYHVVRFTRNGGNATLQVDSWPVNEHYPTGNTDSERFQMVKQKIPFKYNRPVEEWLQEKGRQLTIFNTQAQIAIGGKDRGRLFQGQLSGLYYNGLKVLNMAAENNPNIKINGSVRLVGEVPSILGTTPTTSVPPEMSTTVMETTTTMATTTTRKNRSPPSIQTTDDIVSSAECSSDDEDFIDCEPSTGKSGGELVIPLLVEDPLDIPPIATRAPFITLPPTFRPLLTIIETTKDSLSMTSEAGLPCLSDQGSDGCDDDGLVISGYGSGETFDSNLPPTDDEDFYTTFSLVTDKSLSTSIFEGGYKAHAPKWESKDFRPNKVSETGRTTTTSLSPELIRSTASSSTGMVPKLPAGKMNNRELKPQPDIVLLPLPTAYELDSTKLKSPLITSPMFRNVPTANPTEPGIRRVPGASEVVRESSSTTGMVVGIVAAAALCILILLYAMYKYRNRDEGSYQVDETRNYISNSAQSNGTLMKEKQQSSKSGHKKQKNKDKEYYV.

The N-terminal stretch at 1-35 (MHLRTNPSICPGRRPAWTLWMCSLFWGCIVSSVWS) is a signal peptide. At 36–593 (SSNVASSASS…EVVRESSSTT (558 aa)) the chain is on the extracellular side. In terms of domain architecture, Laminin G-like spans 84 to 284 (ATYIFGKSGG…NPNIKINGSV (201 aa)). A disordered region spans residues 510 to 529 (TASSSTGMVPKLPAGKMNNR). The helical transmembrane segment at 594–614 (GMVVGIVAAAALCILILLYAM) threads the bilayer. Residues 615–668 (YKYRNRDEGSYQVDETRNYISNSAQSNGTLMKEKQQSSKSGHKKQKNKDKEYYV) lie on the Cytoplasmic side of the membrane. Positions 636–668 (NSAQSNGTLMKEKQQSSKSGHKKQKNKDKEYYV) are disordered.

It belongs to the neurexin family. Processed by alpha-secretase leading to the formation of an extracellular soluble protein as well as a C-terminal membrane-embedded fragment (CTF). Proteolysis of these CTFs by gamma-secretase releases intracellular domains (ICDs) and extracellular peptides. In terms of tissue distribution, brain and arteries (at protein level).

The protein resides in the membrane. In terms of biological role, neuronal cell surface protein that may be involved in cell recognition and cell adhesion. Plays a role in angiogenesis. This is Neurexin-3-beta (NRXN3) from Gallus gallus (Chicken).